The chain runs to 1410 residues: DNA-directed RNA polymerase subunit beta' (1410 aa).

Positions 70, 72, 85, and 88 each coordinate Zn(2+). The Mg(2+) site is built by D460, D462, and D464. Zn(2+)-binding residues include C814, C888, C895, and C898.

This sequence belongs to the RNA polymerase beta' chain family. In terms of assembly, the RNAP catalytic core consists of 2 alpha, 1 beta, 1 beta' and 1 omega subunit. When a sigma factor is associated with the core the holoenzyme is formed, which can initiate transcription. Mg(2+) is required as a cofactor. It depends on Zn(2+) as a cofactor.

The enzyme catalyses RNA(n) + a ribonucleoside 5'-triphosphate = RNA(n+1) + diphosphate. Functionally, DNA-dependent RNA polymerase catalyzes the transcription of DNA into RNA using the four ribonucleoside triphosphates as substrates. In Saccharophagus degradans (strain 2-40 / ATCC 43961 / DSM 17024), this protein is DNA-directed RNA polymerase subunit beta'.